The sequence spans 293 residues: Ribosomal protein L11 methyltransferase (293 aa).

Positions 145, 166, 188, and 230 each coordinate S-adenosyl-L-methionine.

Belongs to the methyltransferase superfamily. PrmA family.

It localises to the cytoplasm. It carries out the reaction L-lysyl-[protein] + 3 S-adenosyl-L-methionine = N(6),N(6),N(6)-trimethyl-L-lysyl-[protein] + 3 S-adenosyl-L-homocysteine + 3 H(+). Methylates ribosomal protein L11. The sequence is that of Ribosomal protein L11 methyltransferase from Erwinia tasmaniensis (strain DSM 17950 / CFBP 7177 / CIP 109463 / NCPPB 4357 / Et1/99).